A 491-amino-acid polypeptide reads, in one-letter code: Ribonuclease Y (491 aa).

The helical transmembrane segment at 4-24 (LIATVGVVAVAALVIAIFVVI) threads the bilayer. The KH domain occupies 181-247 (VVSVVHLPGD…RVALERLVDD (67 aa)). Residues 307-400 (VLKHLVETAH…TQAADAISGG (94 aa)) form the HD domain.

Belongs to the RNase Y family.

It is found in the cell membrane. Its function is as follows. Endoribonuclease that initiates mRNA decay. The polypeptide is Ribonuclease Y (Acidothermus cellulolyticus (strain ATCC 43068 / DSM 8971 / 11B)).